Here is a 249-residue protein sequence, read N- to C-terminus: Deoxyribose-phosphate aldolase (249 aa).

The active-site Proton donor/acceptor is the aspartate 109. Lysine 171 acts as the Schiff-base intermediate with acetaldehyde in catalysis. The active-site Proton donor/acceptor is the lysine 200.

It belongs to the DeoC/FbaB aldolase family. DeoC type 1 subfamily.

It is found in the cytoplasm. It carries out the reaction 2-deoxy-D-ribose 5-phosphate = D-glyceraldehyde 3-phosphate + acetaldehyde. Its pathway is carbohydrate degradation; 2-deoxy-D-ribose 1-phosphate degradation; D-glyceraldehyde 3-phosphate and acetaldehyde from 2-deoxy-alpha-D-ribose 1-phosphate: step 2/2. In terms of biological role, catalyzes a reversible aldol reaction between acetaldehyde and D-glyceraldehyde 3-phosphate to generate 2-deoxy-D-ribose 5-phosphate. In Klebsiella pneumoniae subsp. pneumoniae (strain ATCC 700721 / MGH 78578), this protein is Deoxyribose-phosphate aldolase.